The sequence spans 103 residues: Pyrimidine/purine nucleoside phosphorylase (103 aa).

Belongs to the nucleoside phosphorylase PpnP family.

The enzyme catalyses a purine D-ribonucleoside + phosphate = a purine nucleobase + alpha-D-ribose 1-phosphate. It carries out the reaction adenosine + phosphate = alpha-D-ribose 1-phosphate + adenine. The catalysed reaction is cytidine + phosphate = cytosine + alpha-D-ribose 1-phosphate. It catalyses the reaction guanosine + phosphate = alpha-D-ribose 1-phosphate + guanine. The enzyme catalyses inosine + phosphate = alpha-D-ribose 1-phosphate + hypoxanthine. It carries out the reaction thymidine + phosphate = 2-deoxy-alpha-D-ribose 1-phosphate + thymine. The catalysed reaction is uridine + phosphate = alpha-D-ribose 1-phosphate + uracil. It catalyses the reaction xanthosine + phosphate = alpha-D-ribose 1-phosphate + xanthine. In terms of biological role, catalyzes the phosphorolysis of diverse nucleosides, yielding D-ribose 1-phosphate and the respective free bases. Can use uridine, adenosine, guanosine, cytidine, thymidine, inosine and xanthosine as substrates. Also catalyzes the reverse reactions. The protein is Pyrimidine/purine nucleoside phosphorylase of Methylococcus capsulatus (strain ATCC 33009 / NCIMB 11132 / Bath).